Consider the following 1278-residue polypeptide: Cytoplasmic FMR1-interacting protein 2 (1278 aa).

Position 1062 is an N6-acetyllysine (K1062).

This sequence belongs to the CYFIP family. In terms of assembly, component of the WAVE1 complex composed of ABI2, CYFIP2, BRK1, NCKAP1 and WASF1/WAVE1. Interacts with FMR1, FXR1 and FXR2. Interacts with FMR1 isoform 6; the interaction occurs in a RNA-dependent manner. Interacts with RAC1 (activated form) which causes the complex to dissociate, releasing activated WASF1. The complex can also be activated by NCK1. Interacts with SHANK3; the interaction mediates the association of SHANK3 with the WAVE1 complex. Interacts with TMEM108 (via N-terminus); the interaction associates TMEM108 with the WAVE1 complex. In terms of tissue distribution, expressed in T-cells. Increased expression is observed in CD4(+) T-lymphocytes from patients with multiple sclerosis (at protein level).

The protein localises to the cytoplasm. Its subcellular location is the nucleus. It localises to the perinuclear region. It is found in the synapse. The protein resides in the synaptosome. Involved in T-cell adhesion and p53/TP53-dependent induction of apoptosis. Does not bind RNA. As component of the WAVE1 complex, required for BDNF-NTRK2 endocytic trafficking and signaling from early endosomes. The protein is Cytoplasmic FMR1-interacting protein 2 of Homo sapiens (Human).